The chain runs to 56 residues: uncharacterized protein (56 aa).

This is an uncharacterized protein from Haemophilus influenzae (strain ATCC 51907 / DSM 11121 / KW20 / Rd).